Reading from the N-terminus, the 212-residue chain is Riboflavin kinase (212 aa).

The interval 1-83 is unknown; sequence MTELYCERKT…NLLRYFDIAS (83 aa). Residues 84-212 form a riboflavin kinase region; sequence IKLVGRVVTG…GDRVELEVYL (129 aa). 93–98 is a CDP binding site; sequence GLGEGA. Positions 122 and 124 each coordinate Mg(2+). Residues threonine 179 and glutamate 187 each coordinate FMN. Residue 192 to 195 coordinates CDP; sequence VRVR.

The protein belongs to the archaeal riboflavin kinase family. Mg(2+) is required as a cofactor.

It catalyses the reaction riboflavin + CTP = CDP + FMN + H(+). It participates in cofactor biosynthesis; FMN biosynthesis; FMN from riboflavin (CTP route): step 1/1. In terms of biological role, catalyzes the CTP-dependent phosphorylation of riboflavin (vitamin B2) to form flavin mononucleotide (FMN). The chain is Riboflavin kinase (ribK) from Pyrobaculum calidifontis (strain DSM 21063 / JCM 11548 / VA1).